A 274-amino-acid chain; its full sequence is MDSIDRLKTYLATYDNLDSALQDANESEERREDKYLQDLFIEDQGDKPTPSYYQEEESSDSDTDYNAEHLTMLSPDERIDKWEEDLPELEKIDDDIPVTFSDWTQPVMKENGGEKSLSLFPPVGLTKVQTDQWRKTIEAVCESSKYWNLSECQIMNSEDRLILKGRIMTPDCSSSIKSQNSIQSSESLSSSHSPGPAPKSRNQLGLWDSKSTEVQLISKRAGVKDMMVKLTDFFGSEEEYYSVCPEGAPDLMGAIIMGLKHKKLFNQARMKYRI.

Residues 1–59 form an interaction with N(0) region; that stretch reads MDSIDRLKTYLATYDNLDSALQDANESEERREDKYLQDLFIEDQGDKPTPSYYQEEESS. A Phosphotyrosine; by host modification is found at Tyr-14. Residues 22–65 are disordered; it reads QDANESEERREDKYLQDLFIEDQGDKPTPSYYQEEESSDSDTDY. Residues 27-36 show a composition bias toward basic and acidic residues; that stretch reads SEERREDKYL. The segment at 49-101 is interaction with the L polymerase; it reads TPSYYQEEESSDSDTDYNAEHLTMLSPDERIDKWEEDLPELEKIDDDIPVTFS. Over residues 54-65 the composition is skewed to acidic residues; sequence QEEESSDSDTDY. Ser-59 and Ser-61 each carry phosphoserine; by host CK2. The segment at 104 to 165 is oligomerization; that stretch reads TQPVMKENGG…NSEDRLILKG (62 aa). The tract at residues 166–202 is hinge; sequence RIMTPDCSSSIKSQNSIQSSESLSSSHSPGPAPKSRN. A compositionally biased stretch (low complexity) spans 174–193; it reads SSIKSQNSIQSSESLSSSHS. The segment at 174–204 is disordered; it reads SSIKSQNSIQSSESLSSSHSPGPAPKSRNQL. Phosphoserine; by host is present on Ser-236. Phosphoserine is present on Ser-242. The tract at residues 254–274 is interaction with the Nucleoprotein-RNA and template-binding; it reads AIIMGLKHKKLFNQARMKYRI.

The protein belongs to the vesiculovirus protein P family. As to quaternary structure, homodimer. Interacts with the L polymerase; the association of P and L forms the polymerase complex and positions P optimally for encapsidation of newly synthesized genomes with the nucleoprotein. Interacts (via N-terminus) with N(0). Interacts (via C-terminus) with N in ribonucleocapsid (via C-terminus); this interaction allows to package the L polymerase in the virion and positions the polymerase on the template, since P acts as a bridge between N and L. Post-translationally, phosphorylated in the N-terminus by host CK2. Phosphorylation of the phosphoprotein is required for the transcriptional function of the P-L complex.

It is found in the virion. Its subcellular location is the host cytoplasm. Nonenzymatic cofactor regulating the function and conformation of the RNA polymerase and part of the transcription and replication complex. Binds the viral ribonucleocapsid and positions the L polymerase on the template. Acts as a chaperone for newly synthesized free N protein, so-called N(0). Plays a role in virion assembly. This chain is Phosphoprotein (P), found in Vesicular stomatitis New Jersey virus (strain Missouri subtype Hazelhurst) (VSNJV).